The chain runs to 613 residues: Dihydroxy-acid dehydratase (613 aa).

Asp-81 serves as a coordination point for Mg(2+). Cys-122 provides a ligand contact to [2Fe-2S] cluster. The Mg(2+) site is built by Asp-123 and Lys-124. At Lys-124 the chain carries N6-carboxylysine. Cys-195 is a binding site for [2Fe-2S] cluster. Glu-491 is a Mg(2+) binding site. Catalysis depends on Ser-517, which acts as the Proton acceptor.

The protein belongs to the IlvD/Edd family. As to quaternary structure, homodimer. It depends on [2Fe-2S] cluster as a cofactor. Requires Mg(2+) as cofactor.

It carries out the reaction (2R)-2,3-dihydroxy-3-methylbutanoate = 3-methyl-2-oxobutanoate + H2O. It catalyses the reaction (2R,3R)-2,3-dihydroxy-3-methylpentanoate = (S)-3-methyl-2-oxopentanoate + H2O. Its pathway is amino-acid biosynthesis; L-isoleucine biosynthesis; L-isoleucine from 2-oxobutanoate: step 3/4. The protein operates within amino-acid biosynthesis; L-valine biosynthesis; L-valine from pyruvate: step 3/4. Functions in the biosynthesis of branched-chain amino acids. Catalyzes the dehydration of (2R,3R)-2,3-dihydroxy-3-methylpentanoate (2,3-dihydroxy-3-methylvalerate) into 2-oxo-3-methylpentanoate (2-oxo-3-methylvalerate) and of (2R)-2,3-dihydroxy-3-methylbutanoate (2,3-dihydroxyisovalerate) into 2-oxo-3-methylbutanoate (2-oxoisovalerate), the penultimate precursor to L-isoleucine and L-valine, respectively. In Aeromonas salmonicida (strain A449), this protein is Dihydroxy-acid dehydratase.